Consider the following 534-residue polypeptide: Probable protein kinase UbiB (534 aa).

A helical transmembrane segment spans residues 23-43 (DLLFDLPLPWFLLALRFALPW). In terms of domain architecture, Protein kinase spans 125–492 (RFDIEPLASA…WHKRKDDWFL (368 aa)). ATP contacts are provided by residues 131 to 139 (LASASVAQV) and Lys-153. The active-site Proton acceptor is Asp-288. Transmembrane regions (helical) follow at residues 490–510 (WFLR…AAGG) and 512–532 (LHEL…YLIV).

This sequence belongs to the ABC1 family. UbiB subfamily.

Its subcellular location is the cell inner membrane. Its pathway is cofactor biosynthesis; ubiquinone biosynthesis [regulation]. Its function is as follows. Is probably a protein kinase regulator of UbiI activity which is involved in aerobic coenzyme Q (ubiquinone) biosynthesis. The sequence is that of Probable protein kinase UbiB from Pseudomonas fluorescens (strain ATCC BAA-477 / NRRL B-23932 / Pf-5).